Reading from the N-terminus, the 681-residue chain is Pseudohemocyanin-2 (681 aa).

A signal peptide spans 1-21 (VLLCSLVAATAAWPYFGGFQR). 4 N-linked (GlcNAc...) asparagine glycosylation sites follow: Asn98, Asn191, Asn228, and Asn624.

Belongs to the tyrosinase family. Hemocyanin subfamily. As to quaternary structure, hexamer. In terms of tissue distribution, strongly expressed in ovaries. Also expressed in heart. Not detected in hepatopancreas, gills, connective tissue or muscle.

In terms of biological role, does not function as a hemocyanin. The polypeptide is Pseudohemocyanin-2 (Homarus americanus (American lobster)).